The primary structure comprises 86 residues: Large ribosomal subunit protein bL28 (86 aa).

Belongs to the bacterial ribosomal protein bL28 family.

This chain is Large ribosomal subunit protein bL28, found in Bacteroides thetaiotaomicron (strain ATCC 29148 / DSM 2079 / JCM 5827 / CCUG 10774 / NCTC 10582 / VPI-5482 / E50).